We begin with the raw amino-acid sequence, 54 residues long: MAVQKNKPTRSKRGMRRSHDYLKIPLLSKDKLSGEIHIRHHITKNGYYKGKKVI.

The protein belongs to the bacterial ribosomal protein bL32 family.

The chain is Large ribosomal subunit protein bL32 from Buchnera aphidicola subsp. Baizongia pistaciae (strain Bp).